The sequence spans 190 residues: Threonylcarbamoyl-AMP synthase (190 aa).

The 184-residue stretch at 7 to 190 folds into the YrdC-like domain; that stretch reads SEAVAHAVAV…ALTGELFRQG (184 aa).

It belongs to the SUA5 family. TsaC subfamily.

It localises to the cytoplasm. It catalyses the reaction L-threonine + hydrogencarbonate + ATP = L-threonylcarbamoyladenylate + diphosphate + H2O. Required for the formation of a threonylcarbamoyl group on adenosine at position 37 (t(6)A37) in tRNAs that read codons beginning with adenine. Catalyzes the conversion of L-threonine, HCO(3)(-)/CO(2) and ATP to give threonylcarbamoyl-AMP (TC-AMP) as the acyladenylate intermediate, with the release of diphosphate. The chain is Threonylcarbamoyl-AMP synthase from Klebsiella pneumoniae subsp. pneumoniae (strain ATCC 700721 / MGH 78578).